Consider the following 467-residue polypeptide: Gamma-aminobutyric acid receptor subunit gamma-3 (467 aa).

An N-terminal signal peptide occupies residues 1 to 17 (MAPKLLLLLCLFSGLHA). The Extracellular portion of the chain corresponds to 18–256 (RSRKVEEDEY…FELSRRMGYF (239 aa)). N-linked (GlcNAc...) asparagine glycosylation occurs at Asn110. An intrachain disulfide couples Cys171 to Cys185. The N-linked (GlcNAc...) asparagine glycan is linked to Asn228. Residues 257 to 277 (TIQTYIPCILTVVLSWVSFWI) traverse the membrane as a helical segment. Over 278–283 (KKDATP) the chain is Cytoplasmic. A helical transmembrane segment spans residues 284–303 (ARTALGITTVLTMTTLSTIA). At 304–311 (RKSLPRVS) the chain is on the extracellular side. The chain crosses the membrane as a helical span at residues 312–332 (YVTAMDLFVTVCFLFVFAALM). Topologically, residues 333-446 (EYATLNYYSS…DILELDSYSR (114 aa)) are cytoplasmic. Residues 447-467 (VFFPTSFLLFNLVYWVGYLYL) traverse the membrane as a helical segment.

This sequence belongs to the ligand-gated ion channel (TC 1.A.9) family. Gamma-aminobutyric acid receptor (TC 1.A.9.5) subfamily. GABRG3 sub-subfamily. As to quaternary structure, heteropentamer, formed by a combination of alpha (GABRA1-6), beta (GABRB1-3), gamma (GABRG1-3), delta (GABRD), epsilon (GABRE), rho (GABRR1-3), pi (GABRP) and theta (GABRQ) chains, each subunit exhibiting distinct physiological and pharmacological properties. Post-translationally, may be palmitoylated. In terms of tissue distribution, expressed in brain.

It localises to the postsynaptic cell membrane. Its subcellular location is the cell membrane. It carries out the reaction chloride(in) = chloride(out). Its function is as follows. Gamma subunit of the heteropentameric ligand-gated chloride channel gated by gamma-aminobutyric acid (GABA), a major inhibitory neurotransmitter in the brain. GABA-gated chloride channels, also named GABA(A) receptors (GABAAR), consist of five subunits arranged around a central pore and contain GABA active binding site(s) located at the alpha and beta subunit interface(s). When activated by GABA, GABAARs selectively allow the flow of chloride across the cell membrane down their electrochemical gradient. In Homo sapiens (Human), this protein is Gamma-aminobutyric acid receptor subunit gamma-3.